The sequence spans 487 residues: N-succinylglutamate 5-semialdehyde dehydrogenase (487 aa).

An NAD(+)-binding site is contributed by 221 to 226; the sequence is GSSDTG. Residues Glu244 and Cys278 contribute to the active site.

Belongs to the aldehyde dehydrogenase family. AstD subfamily.

The catalysed reaction is N-succinyl-L-glutamate 5-semialdehyde + NAD(+) + H2O = N-succinyl-L-glutamate + NADH + 2 H(+). The protein operates within amino-acid degradation; L-arginine degradation via AST pathway; L-glutamate and succinate from L-arginine: step 4/5. Functionally, catalyzes the NAD-dependent reduction of succinylglutamate semialdehyde into succinylglutamate. This is N-succinylglutamate 5-semialdehyde dehydrogenase from Burkholderia vietnamiensis (strain G4 / LMG 22486) (Burkholderia cepacia (strain R1808)).